A 437-amino-acid polypeptide reads, in one-letter code: Bystin (437 aa).

Residues 1–105 form a disordered region; the sequence is MPKFKAARGV…DGSDDEDEEW (105 aa). An Omega-N-methylarginine modification is found at arginine 40. Serine 55 carries the post-translational modification Phosphoserine. A compositionally biased stretch (basic and acidic residues) spans 71–87; the sequence is AEHGTGDKPAAPRERTT. Serine 98 is subject to Phosphoserine. Phosphothreonine is present on threonine 156. Phosphoserine is present on residues serine 167 and serine 414.

It belongs to the bystin family. Binds trophinin, tastin and cytokeratins. In terms of tissue distribution, found in the placenta from the sixth week of pregnancy. Was localized in the cytoplasm of the syncytiotrophoblast in the chorionic villi and in endometrial decidual cells at the uteroplacental interface. After week 10, the level decreased and then disappeared from placental villi.

The protein resides in the cytoplasm. Its subcellular location is the nucleus. The protein localises to the nucleolus. Its function is as follows. Required for processing of 20S pre-rRNA precursor and biogenesis of 40S ribosomal subunits. May be required for trophinin-dependent regulation of cell adhesion during implantation of human embryos. This Homo sapiens (Human) protein is Bystin.